Here is a 431-residue protein sequence, read N- to C-terminus: Enolase (431 aa).

Gln-166 is a (2R)-2-phosphoglycerate binding site. Glu-208 (proton donor) is an active-site residue. Positions 245, 288, and 315 each coordinate Mg(2+). Residues Lys-340, Arg-369, Ser-370, and Lys-391 each contribute to the (2R)-2-phosphoglycerate site. Lys-340 functions as the Proton acceptor in the catalytic mechanism.

This sequence belongs to the enolase family. Requires Mg(2+) as cofactor.

It localises to the cytoplasm. The protein localises to the secreted. The protein resides in the cell surface. It catalyses the reaction (2R)-2-phosphoglycerate = phosphoenolpyruvate + H2O. The protein operates within carbohydrate degradation; glycolysis; pyruvate from D-glyceraldehyde 3-phosphate: step 4/5. Catalyzes the reversible conversion of 2-phosphoglycerate (2-PG) into phosphoenolpyruvate (PEP). It is essential for the degradation of carbohydrates via glycolysis. The chain is Enolase from Clostridium botulinum (strain Okra / Type B1).